A 176-amino-acid polypeptide reads, in one-letter code: Prepronociceptin (176 aa).

An N-terminal signal peptide occupies residues 1 to 19 (MKVLLCDLLLLSLFSSVFS). 2 propeptides span residues 20-95 (SCQR…MQHL) and 169-176 (TLHQNGNV).

The protein belongs to the opioid neuropeptide precursor family. In terms of processing, specific enzymatic cleavages at paired basic residues probably yield other active peptides besides nociceptin. The N-terminal domain contains 6 conserved cysteines thought to be involved in disulfide bonding and/or processing. Predominantly expressed in the brain and spinal cord. Also expressed and secreted by peripheral blood neutrophils following degranulation.

The protein localises to the secreted. In terms of biological role, ligand of the opioid receptor-like receptor OPRL1. It may act as a transmitter in the brain by modulating nociceptive and locomotor behavior. May be involved in neuronal differentiation and development. Its function is as follows. Blocks nociceptin action in pain transmission by inhibiting nociceptin-induced hyperalgesia and allodynia. Has potent analgesic activity. This chain is Prepronociceptin (PNOC), found in Homo sapiens (Human).